A 511-amino-acid polypeptide reads, in one-letter code: V-type proton ATPase subunit B, brain isoform (511 aa).

R400 lines the ATP pocket.

It belongs to the ATPase alpha/beta chains family. In terms of assembly, V-ATPase is a heteromultimeric enzyme made up of two complexes: the ATP-hydrolytic V1 complex and the proton translocation V0 complex. The V1 complex consists of three catalytic AB heterodimers that form a heterohexamer, three peripheral stalks each consisting of EG heterodimers, one central rotor including subunits D and F, and the regulatory subunits C and H. The proton translocation complex V0 consists of the proton transport subunit a, a ring of proteolipid subunits c9c'', rotary subunit d, subunits e and f, and the accessory subunits ATP6AP1/Ac45 and ATP6AP2/PRR. Expressed in brain (at protein level). Expressed in all tissues tested, but highest in brain and in adrenal medulla.

The protein localises to the apical cell membrane. It is found in the melanosome. Its subcellular location is the cytoplasm. It localises to the cytoplasmic vesicle. The protein resides in the clathrin-coated vesicle membrane. The protein localises to the secretory vesicle. It is found in the synaptic vesicle membrane. Non-catalytic subunit of the V1 complex of vacuolar(H+)-ATPase (V-ATPase), a multisubunit enzyme composed of a peripheral complex (V1) that hydrolyzes ATP and a membrane integral complex (V0) that translocates protons. V-ATPase is responsible for acidifying and maintaining the pH of intracellular compartments and in some cell types, is targeted to the plasma membrane, where it is responsible for acidifying the extracellular environment. In renal intercalated cells, can partially compensate the lack of ATP6V1B1 and mediate secretion of protons (H+) into the urine under base-line conditions but not in conditions of acid load. This is V-type proton ATPase subunit B, brain isoform (ATP6V1B2) from Bos taurus (Bovine).